The following is a 115-amino-acid chain: Protein V2 (115 aa).

It belongs to the geminiviridae protein AV2/V2 family. Interacts with host SGS3.

The protein resides in the host cytoplasm. Its subcellular location is the host perinuclear region. Through its interaction with host SGS3, acts as a suppressor of RNA-mediated gene silencing, also known as post-transcriptional gene silencing (PTGS), a mechanism of plant viral defense that limits the accumulation of viral RNAs. This Tomato yellow leaf curl Sardinia virus (isolate Spain-2) (TYLCSV) protein is Protein V2.